We begin with the raw amino-acid sequence, 355 residues long: Serpentine receptor class epsilon-1 (355 aa).

The next 7 membrane-spanning stretches (helical) occupy residues F28–I48, L56–I76, I102–V122, I144–L164, V172–F192, V232–S252, and F268–S288.

This sequence belongs to the nematode receptor-like protein sre family.

Its subcellular location is the membrane. The polypeptide is Serpentine receptor class epsilon-1 (sre-1) (Caenorhabditis elegans).